The primary structure comprises 225 residues: 7-carboxy-7-deazaguanine synthase (225 aa).

Residues 12–14 (IQG) and Arg27 each bind substrate. Residues 18–225 (YIGVRQLFVR…PQVHKYLGVR (208 aa)) form the Radical SAM core domain. 3 residues coordinate [4Fe-4S] cluster: Cys31, Cys35, and Cys38. Thr40 contributes to the Mg(2+) binding site. Thr80 is a substrate binding site. S-adenosyl-L-methionine is bound at residue Gly82.

Belongs to the radical SAM superfamily. 7-carboxy-7-deazaguanine synthase family. As to quaternary structure, homodimer. Requires [4Fe-4S] cluster as cofactor. S-adenosyl-L-methionine serves as cofactor. It depends on Mg(2+) as a cofactor.

The enzyme catalyses 6-carboxy-5,6,7,8-tetrahydropterin + H(+) = 7-carboxy-7-deazaguanine + NH4(+). Its pathway is purine metabolism; 7-cyano-7-deazaguanine biosynthesis. Its function is as follows. Catalyzes the complex heterocyclic radical-mediated conversion of 6-carboxy-5,6,7,8-tetrahydropterin (CPH4) to 7-carboxy-7-deazaguanine (CDG), a step common to the biosynthetic pathways of all 7-deazapurine-containing compounds. In Archaeoglobus fulgidus (strain ATCC 49558 / DSM 4304 / JCM 9628 / NBRC 100126 / VC-16), this protein is 7-carboxy-7-deazaguanine synthase.